The following is a 477-amino-acid chain: POC1 centriolar protein homolog B (477 aa).

7 WD repeats span residues 16 to 55 (GHKAAITSADFSPNCKQIATASWDTFLMLWSLKPHARAYR), 58 to 97 (GHKDVVTSLQFSPQGNLLASASRDKTVRLWVLDRKGKSSE), 100 to 139 (AHTAPVRSVDFSADGQFLVTASEDKSIKVWSMYRQRFLYS), 142 to 181 (RHTHWVRCAKFSPDGRLIVSCSEDKTIKIWDTTSKQCVNN), 183 to 223 (SDSV…LLQH), 226 to 265 (VHSCGVNCLSFHPSGNSLVTASSDGTVKILDLVEGRLIYT), and 268 to 307 (GHTGPVFTVSFSKDGELFTSGGADAQVLVWRTSFNQVHYR). Residues 449–469 (EQRLSLTEDKLKDCLENQQKL) adopt a coiled-coil conformation.

It belongs to the WD repeat POC1 family. In terms of assembly, interacts with POC1A. Interacts with FAM161A. Interacts with CEP44; the interaction is direct and recruits POC1B to centriolar microtubules. Forms a microtubule-associated complex with POC5, CETN2 and FAM161A. Interacts with CCDC15. Phosphorylated in mitotic cells that may be mediated by CDK1.

Its subcellular location is the cytoplasm. It is found in the cytoskeleton. The protein localises to the microtubule organizing center. The protein resides in the centrosome. It localises to the centriole. Its subcellular location is the cilium basal body. It is found in the spindle pole. In terms of biological role, plays an important role in centriole assembly and/or stability and ciliogenesis. Involved in early steps of centriole duplication, as well as in the later steps of centriole length control. Acts in concert with POC1A to ensure centriole integrity and proper mitotic spindle formation. Required for primary cilia formation, ciliary length and also cell proliferation. Required for retinal integrity. Acts as a positive regulator of centriole elongation. This Rattus norvegicus (Rat) protein is POC1 centriolar protein homolog B (Poc1b).